The sequence spans 2422 residues: MATGEHTPDDPLLRGKRRQDLQEMLREVGLDVEYWLPKLQEHLGVTCAQALQHLDKNNLKKLKSQTQHPWEKLLNLSHSKSLSALLQESQVERAKRKQKQAEQALQELRDLLTEGKQRQEEAVRTREAELRQAMDIPEEYWPSPEEPLRELMENLQRQLNLMKWTLCHRQNLPDRDVVRWASGGLALQGIYKASHQRGLTEKREELLSVPKEFLLLGPQQGTQMKTKEFTSPQAEFMFTQMVEKLGFRLTTSAKDGNWGFSLEAGLDHSKHPESKETQQSSSENSYFCSTKFSYIPLASCHFPIDQLQLSKPAVQELKCIEELLSQTTNPDRFSLLRHRIINFFHRFGSHVNQGPLHLGGIYWWKAISEGYCTEQLAEVRQQSAEALDIFIRDSYSGFGVKVAAGVNVSDSHSKTATQTKTSQNLQTKVQLSVAQTGGPPEADGLVQWKAGLIASNQTWCVIDRGLQLVPVWDIILSSHRSNFKDPLQVANFLKDSYTALTSITAQIQNGEELLSAGKEARVFLEDVKSWEVSDPEEQLKKLINFMKMLSQKLKSYDTWINICLTDSLQNFLVNTINFCKKSSIYKTKCIKSHLRSLLDPHIYRVTNFPQAHFIMQWIFQSDSEQEQVNISQFSQLIEILKETQNNLMEVKVKSESPETVEEAQRKSTYEVSLALSCFLNYLQKTEQTDTQLLLLSIAAAAGYHVINNTFQSLLGCDELSFLLDEMQTAQNKYQELKNICSYRAQAFLVLTGLTATVGDTAISSEEKTQRMSLMRHHMGQSLSKEVAHVLTKPGADHDWENLEKDLRLLINGDYEEVTISSLQMEEVSKQSLFYGKKQPHEPHDNENNKWEMIKNGAFLDLLQHLGLEHYYPKKLSKANFHLIYKTSVYNTQPSSEQELPFYFLQKLLMMDYELRYLVFKDDRNTEHQVHPNASDQEDEAFDPYENFFEDSDSPTKSSSTEPSPHIHPVDIQMTIFHCADNFARQYILAKLSTCQFALPLLVPNPCTSQIEFSLWSLRQITRSWQEARKSPKGKNYYKNQQMCCVSTSIVSFVRVGNGLSASKSQIMNCLLSKRKHDVFFHRHCTGSRKDCLLMGGMVEICWFCPGGEDEDRFDNCVTFTNLHGDAKEHEQQLSFLKEVSTVIVVLMSASDDNEGNRKIVRNLWQSSRPLICLLDDKEATMTNISGQRMRMGIKNRNEAELTEELTTTIRHLLELSDTALSLEDCSQIAHQQGFLIDEDQRDCKEAKEKAQALMAFLGKMKLSQIKEKLLPLQGQLWHHWCKKDKELYHLREKGNQSIEQHKSEIETDKQIIRHEQLARALPLNDLMQSVLQFLQEHSEIHTKLYFLQWLSVFLDKLTAGHLEELHEKQKYWWSLVQTVKQKAPNSHSLICLQSEIEAISTEISDCTLGIEQLIREVGQIYEALEEASSIKKIFFSLPQIAADLMISGVPIELMDGDAAYVPLTWVAAVFDKVSEKLGDKRLFVLSILGLQSSGKSTVLNALFGLQFTVSAGKCTQGAYMQLLKVEETFTEELGFDFVLAVDTEGLRAPEHSNKSKDRDNELVTFVIGLANLTLINIFGENPSEMQDILQIVVQAFLRMKQVKIFPSCLFVHQNVGEATATDQTMDGRRRLEQKLDEMAAIAAEQEQCLDVTCFSDVIRFDVNTHVYYFAHLWDGNPPMAPPNPRYSHNVQQLKSRILMTATQESRGNIMKISDVKSRVQDLWRGLMNENFIFSFRNTQEVMAMNKLETMYNHWTWELRSHVLGLQNQLINQIQNGKIQTLEASTFEVLVTEKYEVVKQELEKYFNEGPCSKILIQCKANFENKLIVLKEKLISDSKRQANELISFKNQSQERLNKKKTDYEKELLEKSRKLALTVKGKELSEEELHEKFNQLWKKWVCDVSTTLPQVTEPDIDLDSENILWEYFKNKTNVVGLLTNSAEKFQINYDKHIKVNKKYNHIPMTLTVFEKEFINMTTDYIVSRFNKIINNMWKQQCGYNPNYFHEILKTIEEEVKSASTQKRYTFTNTFIIDLCVCLFQRARENFKEMHRAFKRANDPVNYLESKKDDFFTSFKISCQGATSIKTFVDVLWYKLTPAVSTTIWEDMTFKIAGDMRATCPAFNGNRTNLEKHILFSLAEEENFDNYWEYLHNSKSFFRSYIKNHIKRYCSDNGGEKMKTFFEKSLIDIKNTILSAIHESTSVAKDKSSTASEWLDLFCDCLGCNLIFPRRDLISIEHQEIKHTEFLKEAMSAALDLTMKKIEQNYSSKPIEAMVSKIEKMLSEHLCGCWKQCPSCGAICTNTIPTHEGDHSVPFHRPQAVNGEEWYETDDFVIDCCTSLVASDCLLVLRDGRNFPFKNYRQAGGDYAMWSITPDTSIQLYWKWFVSHFRSNLEEKYQKKFAGKGKIPNAWAKITKQDVLEDLKKQ.

Residues 945–965 (ENFFEDSDSPTKSSSTEPSPH) form a disordered region. A compositionally biased stretch (low complexity) spans 954-963 (PTKSSSTEPS). Positions 1479–1720 (DKRLFVLSIL…KISDVKSRVQ (242 aa)) constitute a VLIG-type G domain. GTP contacts are provided by residues 1489–1496 (GLQSSGKS), 1542–1545 (DTEG), and 1619–1622 (TATD).

Belongs to the TRAFAC class dynamin-like GTPase superfamily. Very large inducible GTPase (VLIG) family.

It is found in the cytoplasm. The protein resides in the cytosol. It localises to the nucleus. In Homo sapiens (Human), this protein is Interferon-induced very large GTPase 1 (GVINP1).